The chain runs to 202 residues: Peptide deformylase (202 aa).

The tract at residues 1–24 (MAGSFAQLAKNAEKKKPSISVSKE) is disordered. Fe cation is bound by residues Cys-121 and His-163. The active site involves Glu-164. His-167 is a binding site for Fe cation.

The protein belongs to the polypeptide deformylase family. Fe(2+) serves as cofactor.

It catalyses the reaction N-terminal N-formyl-L-methionyl-[peptide] + H2O = N-terminal L-methionyl-[peptide] + formate. Its function is as follows. Removes the formyl group from the N-terminal Met of newly synthesized proteins. Requires at least a dipeptide for an efficient rate of reaction. N-terminal L-methionine is a prerequisite for activity but the enzyme has broad specificity at other positions. The chain is Peptide deformylase from Prochlorococcus marinus (strain NATL2A).